The following is a 182-amino-acid chain: Fatty-acid and retinol-binding protein 1 (182 aa).

Positions 1–17 are cleaved as a signal peptide; it reads MIRATIILAAVAALAFS. A coiled-coil region spans residues 86–106; it reads EKASKLHQIVKDKVNALNDEA.

It belongs to the fatty-acid and retinol-binding protein (FARBP) family.

The protein localises to the secreted. Functionally, probably binds lipids. The protein is Fatty-acid and retinol-binding protein 1 (far-1) of Caenorhabditis elegans.